The chain runs to 949 residues: Collagen alpha-2(I) chain (949 aa).

Residues 1–949 (SGGFDFSFLP…FGYEGDFYRA (949 aa)) form a disordered region. Proline 10, proline 13, proline 34, and proline 40 each carry 4-hydroxyproline. Positions 27 to 66 (LMGPRGPPGASGAPGPQGFQGPAGEPGEPGQTGPAGARGP) are enriched in low complexity. Lysine 95 carries the post-translational modification 5-hydroxylysine; alternate. O-linked (Gal...) hydroxylysine; alternate glycosylation is present at lysine 95. Composition is skewed to low complexity over residues 147–162 (SVGPVGPAGPIGSAGP) and 208–229 (PGANGLTGAKGAAGLPGVAGAP). Positions 263-272 (GESGGKGEPG) are enriched in gly residues. Low complexity predominate over residues 273–283 (SAGPQGPPGSS). Residues 292-313 (NGEGSTGPTGPPGLRGGPGSRG) show a composition bias toward gly residues. 4-hydroxyproline is present on residues proline 348 and proline 351. Low complexity predominate over residues 377–396 (LPGIDGRPGPIGPAGARGEA). The segment covering 435 to 444 (GVQGGKGEQG) has biased composition (gly residues). 2 stretches are compositionally biased toward low complexity: residues 490-507 (PGESGAVGPSGAIGSRGP) and 519-529 (EPGVVGAPGTA). The segment covering 530–539 (GPAGSGGLPG) has biased composition (gly residues). 2 stretches are compositionally biased toward low complexity: residues 562 to 606 (VGTT…PRGS) and 613 to 633 (VGPAGPNGFAGPAGAAGQPGA). A compositionally biased stretch (basic and acidic residues) spans 634-643 (KGERGTKGPK). The span at 651–661 (PTGPVGSAGPA) shows a compositional bias: low complexity. Gly residues predominate over residues 671–680 (GSRGDGGPPG). Low complexity predominate over residues 682-691 (TGFPGAAGRT). Residues 722 to 736 (GPVGRGETGAGGPPG) are compositionally biased toward gly residues. Low complexity-rich tracts occupy residues 737–771 (FTGEKGPSGEPGTAGPPGTAGPQGLLGAPGILGLP), 779–792 (LPGVAGAVGEPGPL), and 810–825 (EPGPVGSVGPVGALGP). A compositionally biased stretch (basic and acidic residues) spans 835–846 (RGDKGEPGEKGP). A compositionally biased stretch (pro residues) spans 921-931 (PAGPPGPPGPP).

Belongs to the fibrillar collagen family. Trimers of one alpha 2(I) and two alpha 1(I) chains. Interacts (via C-terminus) with TMEM131 (via PapD-L domain); the interaction is direct and is involved in assembly and TRAPPIII ER-to-Golgi transport complex-dependent secretion of collagen. In terms of processing, prolines at the third position of the tripeptide repeating unit (G-X-Y) are hydroxylated in some or all of the chains. Expressed in bones.

It localises to the secreted. Its subcellular location is the extracellular space. It is found in the extracellular matrix. Functionally, type I collagen is a member of group I collagen (fibrillar forming collagen). In Acratocnus ye (Hispaniolan ground sloth), this protein is Collagen alpha-2(I) chain.